The sequence spans 80 residues: MSPKVQALIFIVGLITLLAAHAQEELSDNTESERGCSGAYKRCSSSQRCCEGRPCVCSAINSNCKCRKTYTELFKEYFEK.

The N-terminal stretch at 1–22 (MSPKVQALIFIVGLITLLAAHA) is a signal peptide. A propeptide spanning residues 23-34 (QEELSDNTESER) is cleaved from the precursor. Intrachain disulfides connect Cys-36–Cys-50, Cys-43–Cys-55, Cys-49–Cys-66, and Cys-57–Cys-64.

The protein belongs to the neurotoxin 02 (plectoxin) family. 05 (U19-lycotoxin) subfamily. In terms of tissue distribution, expressed by the venom gland.

It localises to the secreted. In Lycosa singoriensis (Wolf spider), this protein is U19-lycotoxin-Ls1a.